The sequence spans 92 residues: Small ribosomal subunit protein uS15c (92 aa).

Belongs to the universal ribosomal protein uS15 family. Part of the 30S ribosomal subunit.

The protein localises to the plastid. The protein resides in the chloroplast. This chain is Small ribosomal subunit protein uS15c (rps15), found in Guizotia abyssinica (Niger).